A 258-amino-acid polypeptide reads, in one-letter code: Leucyl/phenylalanyl-tRNA--protein transferase (258 aa).

Belongs to the L/F-transferase family.

The protein resides in the cytoplasm. The catalysed reaction is N-terminal L-lysyl-[protein] + L-leucyl-tRNA(Leu) = N-terminal L-leucyl-L-lysyl-[protein] + tRNA(Leu) + H(+). It carries out the reaction N-terminal L-arginyl-[protein] + L-leucyl-tRNA(Leu) = N-terminal L-leucyl-L-arginyl-[protein] + tRNA(Leu) + H(+). It catalyses the reaction L-phenylalanyl-tRNA(Phe) + an N-terminal L-alpha-aminoacyl-[protein] = an N-terminal L-phenylalanyl-L-alpha-aminoacyl-[protein] + tRNA(Phe). Functionally, functions in the N-end rule pathway of protein degradation where it conjugates Leu, Phe and, less efficiently, Met from aminoacyl-tRNAs to the N-termini of proteins containing an N-terminal arginine or lysine. This chain is Leucyl/phenylalanyl-tRNA--protein transferase, found in Alkalilimnicola ehrlichii (strain ATCC BAA-1101 / DSM 17681 / MLHE-1).